The chain runs to 299 residues: MKVETPVSGVGLGLRRALMGPLSQARDYAPESIPFDFMEVAPENWIPMGGRQGKEFRAFTERYPFVAHGLSLSLGGPEPLDFELLKSVKSFLKQHNIRRYTEHLSYCSDHGHLYDLMPIPFTQEAVYYVADRIRQVQDFLEQPIGIEHVSYYAQLGNAALGAQMSEIDFVNAVLKEANCELLLDVNNAYVNGINHGYDPLDFISALPGERICYLHIAGHFDEAEDLKVDTHGSDVIDPVWALLDHAYQTFGSLPTLLERDFNIPDNATLFAELRKIGGYQQLYPSAAIKSEDWQKPAQP.

Belongs to the UPF0276 family.

The sequence is that of UPF0276 protein ABO_1518 from Alcanivorax borkumensis (strain ATCC 700651 / DSM 11573 / NCIMB 13689 / SK2).